The primary structure comprises 604 residues: Elongation factor 4 (604 aa).

Residues 7 to 189 form the tr-type G domain; the sequence is KRIRNFCIIA…SVVDRVPPPA (183 aa). Residues 19 to 24 and 136 to 139 each bind GTP; these read DHGKST and NKID.

Belongs to the TRAFAC class translation factor GTPase superfamily. Classic translation factor GTPase family. LepA subfamily.

It localises to the cell inner membrane. The catalysed reaction is GTP + H2O = GDP + phosphate + H(+). Required for accurate and efficient protein synthesis under certain stress conditions. May act as a fidelity factor of the translation reaction, by catalyzing a one-codon backward translocation of tRNAs on improperly translocated ribosomes. Back-translocation proceeds from a post-translocation (POST) complex to a pre-translocation (PRE) complex, thus giving elongation factor G a second chance to translocate the tRNAs correctly. Binds to ribosomes in a GTP-dependent manner. The chain is Elongation factor 4 from Synechococcus sp. (strain CC9311).